Here is a 529-residue protein sequence, read N- to C-terminus: Ribonuclease Y (529 aa).

Residues 4–24 (GLIYISLEVLVACLITALIMY) form a helical membrane-spanning segment. Residues 216 to 297 (LTTRIALPCS…NRIEEVYHRV (82 aa)) form the KH domain. The HD domain occupies 342 to 435 (ALQHSKEVAL…VCAADALSAG (94 aa)).

This sequence belongs to the RNase Y family.

The protein localises to the cell membrane. In terms of biological role, endoribonuclease that initiates mRNA decay. The sequence is that of Ribonuclease Y from Helicobacter pylori (strain HPAG1).